A 209-amino-acid polypeptide reads, in one-letter code: Small ribosomal subunit protein uS3c (209 aa).

Residues isoleucine 39–threonine 109 form the KH type-2 domain.

The protein belongs to the universal ribosomal protein uS3 family. In terms of assembly, part of the 30S ribosomal subunit.

Its subcellular location is the plastid. It is found in the chloroplast. This is Small ribosomal subunit protein uS3c (rps3) from Gracilaria tenuistipitata (Red alga).